We begin with the raw amino-acid sequence, 161 residues long: Nucleotide-binding protein PputW619_0959 (161 aa).

It belongs to the YajQ family.

Nucleotide-binding protein. The sequence is that of Nucleotide-binding protein PputW619_0959 from Pseudomonas putida (strain W619).